Reading from the N-terminus, the 505-residue chain is Maturase K (505 aa).

It belongs to the intron maturase 2 family. MatK subfamily.

Its subcellular location is the plastid. It is found in the chloroplast. Its function is as follows. Usually encoded in the trnK tRNA gene intron. Probably assists in splicing its own and other chloroplast group II introns. This Barclaya longifolia (Orchid lily) protein is Maturase K.